Here is an 89-residue protein sequence, read N- to C-terminus: Glutamyl-tRNA(Gln) amidotransferase subunit C (89 aa).

This sequence belongs to the GatC family. In terms of assembly, heterotrimer of A, B and C subunits.

It catalyses the reaction L-glutamyl-tRNA(Gln) + L-glutamine + ATP + H2O = L-glutaminyl-tRNA(Gln) + L-glutamate + ADP + phosphate + H(+). The catalysed reaction is L-aspartyl-tRNA(Asn) + L-glutamine + ATP + H2O = L-asparaginyl-tRNA(Asn) + L-glutamate + ADP + phosphate + 2 H(+). Its function is as follows. Allows the formation of correctly charged Asn-tRNA(Asn) or Gln-tRNA(Gln) through the transamidation of misacylated Asp-tRNA(Asn) or Glu-tRNA(Gln) in organisms which lack either or both of asparaginyl-tRNA or glutaminyl-tRNA synthetases. The reaction takes place in the presence of glutamine and ATP through an activated phospho-Asp-tRNA(Asn) or phospho-Glu-tRNA(Gln). The polypeptide is Glutamyl-tRNA(Gln) amidotransferase subunit C (Thermus thermophilus (strain ATCC 27634 / DSM 579 / HB8)).